The chain runs to 430 residues: Probable sulfoacetate transporter SauU (430 aa).

10 helical membrane passes run 47–67, 83–103, 142–162, 165–185, 228–248, 263–283, 301–321, 327–347, 362–382, and 390–410; these read LGLV…LGGW, LIWG…ILVV, FARL…AAAG, EAFI…AFFF, WLVT…LTWL, LALF…LGGV, AVLF…TFTA, VILL…LWSL, MMNT…GYLI, and LPFM…LFIN.

Belongs to the major facilitator superfamily.

The protein resides in the cell membrane. May transport sulfoacetate into the cell. The protein is Probable sulfoacetate transporter SauU (sauU) of Cupriavidus necator (strain ATCC 17699 / DSM 428 / KCTC 22496 / NCIMB 10442 / H16 / Stanier 337) (Ralstonia eutropha).